Here is a 316-residue protein sequence, read N- to C-terminus: DMOA farnesyltransferase nvfB (316 aa).

A run of 9 helical transmembrane segments spans residues 47–67 (VVGV…TILL), 71–91 (LILV…NDVI), 115–135 (WNAV…LSFL), 139–159 (CAIE…GKRF), 162–182 (FPQL…HSLG), 191–211 (PTFF…VVYS), 234–254 (IELL…AAGY), 258–278 (LGIP…LYFL), and 294–314 (KLAC…EYYL).

The protein belongs to the UbiA prenyltransferase family.

It is found in the membrane. The catalysed reaction is 3,5-dimethylorsellinate + (2E,6E)-farnesyl diphosphate = (3R)-3-farnesyl-6-hydroxy-2,3,5-trimethyl-4-oxocyclohexa-1,5-diene-1-carboxylate + diphosphate + H(+). It functions in the pathway secondary metabolite biosynthesis; terpenoid biosynthesis. In terms of biological role, DMOA farnesyltransferase; part of the gene cluster that mediates the biosynthesis of novofumigatonin, a heavily oxygenated meroterpenoid containing a unique orthoester moiety. The first step of the pathway is the synthesis of 3,5-dimethylorsellinic acid (DMOA) by the polyketide synthase nvfA via condensation of one acetyl-CoA starter unit with 3 malonyl-CoA units and 2 methylations. DMOA is then converted to farnesyl-DMOA by the farnesyltransferase nvfB. Epoxydation by FAD-dependent monooxygenase nvfK, followed by a protonation-initiated cyclization catalyzed by the terpene cyclase nvfL leads to the production of asnavolin H. The short chain dehydrogenase nvfC then as a 3-OH dehydrogenase of asnovolin H to yield chemesin D. There are two branches to synthesize asnovolin A from chemesin D. In one branch, chemesin D undergoes Baeyer-Villiger oxidation by nvfH, methylation by nvfJ, and enoyl reduction by the nvfM D enoylreductase that reduces the double bond between C-5'and C-6', to form respectively asnovolin I, asnovolin K, and asnovolin A. In the other branch, the methylation precedes the Baeyer-Villiger oxidation and the enoyl reduction to yield asnovolin A via the asnovolin J intermediate. Asnovolin A is further converted to fumigatonoid A by the Fe(II)/2-oxoglutarate-dependent dioxygenase nvfI that catalyzes an endoperoxidation reaction. The alpha/beta hydrolase nvfD then acts as an epimerase that converts fumigatonoid A to its C-5' epimer, which then undergoes spontaneous or nvfD-catalyzed lactonization. The following step utilizes the ketoreductase nvfG to produce fumigatonoid B. The dioxygenase nvfE further converts fumigatonoid B into fumigatonoid C. Finally the Fe(II)/2-oxoglutarate-dependent dioxygenase nvfF catalyzes two rounds of oxidation to transform fumigatonoid C into the end product, novofumigatonin A. The polypeptide is DMOA farnesyltransferase nvfB (Aspergillus novofumigatus (strain IBT 16806)).